Reading from the N-terminus, the 1375-residue chain is Probable GMP synthase [glutamine-hydrolyzing] (1375 aa).

The region spanning 7–119 (QILVLDFGSQ…VLEIMESSQD (113 aa)) is the Glutamine amidotransferase type-1; first part domain. Residue Cys84 is the Nucleophile of the active site. The interval 120–500 (SKDSSCFAFQ…NNATQGFKSC (381 aa)) is insert-1. N-acetyltransferase domains follow at residues 141-300 (LSFD…KALE) and 318-484 (VFLR…LEKK). In terms of domain architecture, Glutamine amidotransferase type-1; second part spans 501-580 (SLFKGIKQDS…AVGICGANTC (80 aa)). Residues His554 and Glu556 contribute to the active site. The segment at 597 to 1071 (IVYGGKAHCE…SGVANSLKIT (475 aa)) is insert-2. The 154-residue stretch at 612-765 (MQIQEAFKHI…ELIPLSIARE (154 aa)) folds into the N-acetyltransferase 3 domain. The disordered stretch occupies residues 1011–1036 (RIVDSQHTESSDIKGQSHLESSADSG). Residues 1014–1027 (DSQHTESSDIKGQS) are compositionally biased toward basic and acidic residues. The 196-residue stretch at 1055–1250 (YLEGNDRSGV…LGMPESMLMR (196 aa)) folds into the GMPS ATP-PPase domain. 1083-1089 (SGGVDSS) provides a ligand contact to ATP.

In terms of assembly, homodimer.

The enzyme catalyses XMP + L-glutamine + ATP + H2O = GMP + L-glutamate + AMP + diphosphate + 2 H(+). Its pathway is purine metabolism; GMP biosynthesis; GMP from XMP (L-Gln route): step 1/1. Functionally, catalyzes the synthesis of GMP from XMP. This Helicobacter hepaticus (strain ATCC 51449 / 3B1) protein is Probable GMP synthase [glutamine-hydrolyzing] (guaA).